Consider the following 160-residue polypeptide: 6,7-dimethyl-8-ribityllumazine synthase (160 aa).

5-amino-6-(D-ribitylamino)uracil is bound by residues W27, 59 to 61 (AIE), and 81 to 83 (VVI). Position 86–87 (86–87 (QT)) interacts with (2S)-2-hydroxy-3-oxobutyl phosphate. H89 serves as the catalytic Proton donor. Residue N114 participates in 5-amino-6-(D-ribitylamino)uracil binding. R128 lines the (2S)-2-hydroxy-3-oxobutyl phosphate pocket.

The protein belongs to the DMRL synthase family. In terms of assembly, homopentamer.

It carries out the reaction (2S)-2-hydroxy-3-oxobutyl phosphate + 5-amino-6-(D-ribitylamino)uracil = 6,7-dimethyl-8-(1-D-ribityl)lumazine + phosphate + 2 H2O + H(+). The protein operates within cofactor biosynthesis; riboflavin biosynthesis; riboflavin from 2-hydroxy-3-oxobutyl phosphate and 5-amino-6-(D-ribitylamino)uracil: step 1/2. Catalyzes the formation of 6,7-dimethyl-8-ribityllumazine by condensation of 5-amino-6-(D-ribitylamino)uracil with 3,4-dihydroxy-2-butanone 4-phosphate. This is the penultimate step in the biosynthesis of riboflavin. This chain is 6,7-dimethyl-8-ribityllumazine synthase (ribH), found in Mycobacterium tuberculosis (strain CDC 1551 / Oshkosh).